The sequence spans 347 residues: MEVTALRRSAALVARASSQNAIRPAVCAAISSTSPTPPTQIQTQQTRQFSALNRPPPNYPGHVPLTRLERFGLFVGSGLISLADPLRGDLIASFAEATATPYFIYRLRDAMLSHPTGRRILRQRPRITSQSLNIPYLRSLPPNTVGRTYIDWLDREGVSPDTRSAVRYIDDEECAYVMQRYRECHDFYHALTGLPIVREGEVALKAFEFANTLLPMTGFSVFAAFTMKKSEQKRFRKIYFPWAVKNGLRAKEVINVFWEEELERDVNDLRRELGVEPPPDLREIRKREREEKRRRKEMERMLSGRGTEDVIQKAEKEAEVVAERVKEMRNEVVEKVGEVVGSSAMRG.

The transit peptide at methionine 1–phenylalanine 49 directs the protein to the mitochondrion. Zn(2+) contacts are provided by histidine 185, aspartate 186, histidine 189, and glutamate 201. Positions isoleucine 284–valine 310 are disordered.

It belongs to the COQ4 family. Component of a multi-subunit COQ enzyme complex, composed of at least coq-3, coq-4, coq-5, coq-6, coq-7 and coq-9. Requires Zn(2+) as cofactor.

The protein resides in the mitochondrion inner membrane. It carries out the reaction a 4-hydroxy-3-methoxy-5-(all-trans-polyprenyl)benzoate + H(+) = a 2-methoxy-6-(all-trans-polyprenyl)phenol + CO2. The protein operates within cofactor biosynthesis; ubiquinone biosynthesis. Functionally, lyase that catalyzes the C1-decarboxylation of 4-hydroxy-3-methoxy-5-(all-trans-polyprenyl)benzoic acid into 2-methoxy-6-(all-trans-polyprenyl)phenol during ubiquinone biosynthesis. The polypeptide is Ubiquinone biosynthesis protein coq-4, mitochondrial (Neurospora crassa (strain ATCC 24698 / 74-OR23-1A / CBS 708.71 / DSM 1257 / FGSC 987)).